We begin with the raw amino-acid sequence, 156 residues long: Small ribosomal subunit protein uS7 (156 aa).

Belongs to the universal ribosomal protein uS7 family. As to quaternary structure, part of the 30S ribosomal subunit. Contacts proteins S9 and S11.

Its function is as follows. One of the primary rRNA binding proteins, it binds directly to 16S rRNA where it nucleates assembly of the head domain of the 30S subunit. Is located at the subunit interface close to the decoding center, probably blocks exit of the E-site tRNA. This chain is Small ribosomal subunit protein uS7, found in Latilactobacillus sakei subsp. sakei (strain 23K) (Lactobacillus sakei subsp. sakei).